The primary structure comprises 368 residues: Protein RecA (368 aa).

72 to 79 (GNESSGKT) is an ATP binding site.

It belongs to the RecA family.

The protein localises to the cytoplasm. Can catalyze the hydrolysis of ATP in the presence of single-stranded DNA, the ATP-dependent uptake of single-stranded DNA by duplex DNA, and the ATP-dependent hybridization of homologous single-stranded DNAs. It interacts with LexA causing its activation and leading to its autocatalytic cleavage. This Petrotoga mobilis (strain DSM 10674 / SJ95) protein is Protein RecA.